Reading from the N-terminus, the 481-residue chain is Ras-GEF domain-containing family member 1A (481 aa).

One can recognise an N-terminal Ras-GEF domain in the interval 41–170 (QDGHLISGSL…AIAQMTQSLL (130 aa)). A Ras-GEF domain is found at 214 to 461 (DPLVLAQQLT…FVASFESEGP (248 aa)).

As to expression, detected in brain and spinal cord. Highly expressed in a number of intrahepatic cholangiocarcinoma tissue biopsies.

In terms of biological role, guanine nucleotide exchange factor (GEF) with specificity for RAP2A, KRAS, HRAS, and NRAS (in vitro). Plays a role in cell migration. This is Ras-GEF domain-containing family member 1A (RASGEF1A) from Homo sapiens (Human).